The primary structure comprises 854 residues: Iron and copper transporter IacT (854 aa).

A TonB box motif is present at residues 187-194; the sequence is IELIVTAQ. The TBDR plug domain maps to 199–315; the sequence is DAQDVPLSLT…PAGVVNVISR (117 aa). A TBDR beta-barrel domain is found at 320–854; sequence QPEMRISALY…TYGVRVSASF (535 aa). The short motif at 839 to 854 is the TonB C-terminal box element; sequence GFGDPVTYGVRVSASF.

It belongs to the TonB-dependent receptor family.

The protein localises to the cell outer membrane. Involved in the TonB-dependent uptake of copper and iron under conditions in which the concentration of copper exceeds that of the iron. The sequence is that of Iron and copper transporter IacT from Nostoc sp. (strain PCC 7120 / SAG 25.82 / UTEX 2576).